The chain runs to 247 residues: Phycobilisome rod-core linker polypeptide CpcG2 (247 aa).

The region spanning 11 to 189 (SSQNQRVPGY…YWRDKLESER (179 aa)) is the PBS-linker domain. The tract at residues 223 to 247 (PDTTRNTTPTGIPISVNPSANFPVR) is disordered.

The protein belongs to the phycobilisome linker protein family. Part of the phycobilisome, a hemidiscoidal structure that is composed of two distinct substructures: a core complex and a number of rods radiating from the core.

The protein localises to the cellular thylakoid membrane. Rod-core linker protein required for attachment of phycocyanin to allophycocyanin in cores of phycobilisomes. Its function is as follows. Linker polypeptides determine the state of aggregation and the location of the disk-shaped phycobiliprotein units within the phycobilisome and modulate their spectroscopic properties in order to mediate a directed and optimal energy transfer. This is Phycobilisome rod-core linker polypeptide CpcG2 from Nostoc sp. (strain PCC 7120 / SAG 25.82 / UTEX 2576).